We begin with the raw amino-acid sequence, 424 residues long: Serine hydroxymethyltransferase 2 (424 aa).

Residues leucine 125 and 129–131 (GHL) contribute to the (6S)-5,6,7,8-tetrahydrofolate site. An N6-(pyridoxal phosphate)lysine modification is found at lysine 234. Position 250 (glutamate 250) interacts with (6S)-5,6,7,8-tetrahydrofolate.

The protein belongs to the SHMT family. In terms of assembly, homodimer. Requires pyridoxal 5'-phosphate as cofactor.

Its subcellular location is the cytoplasm. The enzyme catalyses (6R)-5,10-methylene-5,6,7,8-tetrahydrofolate + glycine + H2O = (6S)-5,6,7,8-tetrahydrofolate + L-serine. Its pathway is one-carbon metabolism; tetrahydrofolate interconversion. It functions in the pathway amino-acid biosynthesis; glycine biosynthesis; glycine from L-serine: step 1/1. Catalyzes the reversible interconversion of serine and glycine with tetrahydrofolate (THF) serving as the one-carbon carrier. This reaction serves as the major source of one-carbon groups required for the biosynthesis of purines, thymidylate, methionine, and other important biomolecules. Also exhibits THF-independent aldolase activity toward beta-hydroxyamino acids, producing glycine and aldehydes, via a retro-aldol mechanism. This is Serine hydroxymethyltransferase 2 from Burkholderia mallei (strain ATCC 23344).